Reading from the N-terminus, the 376-residue chain is Inactive CLIP domain-containing serine protease A28 (376 aa).

The signal sequence occupies residues 1–19 (MKVLLFCIVISLTTLIASG). The Clip domain maps to 24–80 (EELRCPGGYCVSKYLCPNGTFIDDIKHAQTTQLIGLRAGLDIDDFDDCNDYLLVCCQ). Intrachain disulfides connect cysteine 28/cysteine 78, cysteine 33/cysteine 71, and cysteine 39/cysteine 79. Residue asparagine 41 is glycosylated (N-linked (GlcNAc...) asparagine). The disordered stretch occupies residues 85 to 106 (PTATSTEKPATSDELIEPPPST). Positions 114 to 364 (NEGGLIYDLR…YVQWLNEHIV (251 aa)) constitute a Peptidase S1 domain. Asparagine 125 and asparagine 279 each carry an N-linked (GlcNAc...) asparagine glycan. Intrachain disulfides connect cysteine 251-cysteine 321, cysteine 280-cysteine 301, and cysteine 311-cysteine 340. A glycan (N-linked (GlcNAc...) asparagine) is linked at asparagine 369.

Belongs to the peptidase S1 family. CLIP subfamily. As to quaternary structure, may form a heterodimer of a light chain and a heavy chain; disulfide-linked. In terms of processing, secreted as a full-length protein. Proteolytically cleaved into two chains which probably remain covalently linked. Cleavage is induced by fungus B.bassiana and Gram-positive or Gram-negative bacteria infection.

Its subcellular location is the secreted. Inactive serine protease which plays an essential role in the innate immune response against bacteria, fungi and protozoa infection by activating the melanization cascade. In the melanization cascade, acts downstream of TEP1, SPCLIP1 and CLIPA8 to promote CLIPC9 proteolytic cleavage. In the susceptible strain G3, appears to be dispensable for parasite P.berghei ookinete elimination which occurs by lysis. Required for the melanization of Gram-positive and Gram-negative bacteria. Required for the melanization of fungus B.bassiana. In Anopheles gambiae (African malaria mosquito), this protein is Inactive CLIP domain-containing serine protease A28.